The following is a 134-amino-acid chain: Isocitrate dehydrogenase [NAD] subunit alpha, mitochondrial (134 aa).

Lys37 carries the post-translational modification N6-succinyllysine. Residue Thr50 is modified to Phosphothreonine. Residues Arg64, Arg74, and Arg95 each contribute to the substrate site.

It belongs to the isocitrate and isopropylmalate dehydrogenases family. As to quaternary structure, heterooligomer of subunits alpha (IDH3A), beta (IDH3B), and gamma (IDH3G) in the apparent ratio of 2:1:1. The heterodimer containing one IDH3A and one IDH3B subunit and the heterodimer containing one IDH3A and one IDH3G subunit assemble into a heterotetramer (which contains two subunits of IDH3A, one of IDH3B and one of IDH3G) and further into the heterooctamer. Requires Mg(2+) as cofactor. Mn(2+) serves as cofactor.

Its subcellular location is the mitochondrion. The enzyme catalyses D-threo-isocitrate + NAD(+) = 2-oxoglutarate + CO2 + NADH. Its activity is regulated as follows. The heterotetramer and the heterodimer composed of IDH3A and IDH3G subunits can be allosterically activated by citrate (CIT) or/and ADP, and the two activators can act independently or synergistically. The heterodimer composed of IDH3A and IDH3B subunits cannot be allosterically regulated and the allosteric regulation of the heterotetramer is through the IDH3G subunit and not the IDH3B subunit. The IDH3G subunit contains the allosteric site which consists of a CIT-binding site and an ADP-binding site, and the binding of CIT and ADP causes conformational changes at the allosteric site which are transmitted to the active site in the catalytic subunit (IDH3A) through a cascade of conformational changes at the heterodimer interface, leading to stabilization of the isocitrate-binding at the active site and thus activation of the enzyme. ATP can activate the heterotetramer and the heterodimer composed of IDH3A and IDH3G subunits at low concentrations but inhibits their activities at high concentrations, whereas ATP exhibits only inhibitory effect on the heterodimer composed of IDH3A and IDH3B subunits. In terms of biological role, catalytic subunit of the enzyme which catalyzes the decarboxylation of isocitrate (ICT) into alpha-ketoglutarate. The heterodimer composed of the alpha (IDH3A) and beta (IDH3B) subunits and the heterodimer composed of the alpha (IDH3A) and gamma (IDH3G) subunits, have considerable basal activity but the full activity of the heterotetramer (containing two subunits of IDH3A, one of IDH3B and one of IDH3G) requires the assembly and cooperative function of both heterodimers. In Mesocricetus auratus (Golden hamster), this protein is Isocitrate dehydrogenase [NAD] subunit alpha, mitochondrial.